Reading from the N-terminus, the 358-residue chain is Hydroxyproline O-arabinosyltransferase 2 (358 aa).

The helical; Signal-anchor transmembrane segment at 7 to 26 (YFFPILMTLSLFLIIRYNYI) threads the bilayer.

In terms of tissue distribution, ubiquitous.

The protein localises to the golgi apparatus. It is found in the cis-Golgi network membrane. The catalysed reaction is trans-4-hydroxy-L-prolyl-[protein] + UDP-beta-L-arabinofuranose = O-(beta-L-arabinofuranosyl)-trans-4-hydroxy-L-prolyl-[protein] + UDP + H(+). Its function is as follows. Glycosyltransferase involved in the O-arabinosylation of several proteins including extensins and small signaling peptides. Catalyzes the transfer of the initial L-arabinose to the hydroxyl group of Hyp residues. Contributes redundantly with HPAT1 and HPAT3 to arabinosylation of EXT3. The sequence is that of Hydroxyproline O-arabinosyltransferase 2 from Arabidopsis thaliana (Mouse-ear cress).